We begin with the raw amino-acid sequence, 469 residues long: Mitochondrial adenyl nucleotide antiporter SLC25A25 (469 aa).

The segment at 1-165 is regulatory N-terminal domain; that stretch reads MLCLCLYVPI…LYWKHSTIFD (165 aa). Residues 1–189 lie on the Mitochondrial intermembrane side of the membrane; sequence MLCLCLYVPI…ERQTGMWWRH (189 aa). EF-hand domains lie at 47 to 80, 78 to 113, and 114 to 149; these read TYRQWKQKIVQAGDKDLDGQLDFEEFVHYLQDHE, DHEKKLRLVFKSLDKKNDGRIDAQEIMQSLRDLGVK, and ISEQQAEKILKSMDKNGTMTIDWNEWRDYHLLHPVE. Ca(2+) contacts are provided by Asp-60, Asp-62, Asp-64, Gln-66, and Glu-71. The segment at 151–160 is linker region; sequence IPEIILYWKH. Residues 166–469 are C-terminal transmembrane transporter domain; it reads VGENLTVPDE…LKITLGVQSR (304 aa). 3 Solcar repeats span residues 184–270, 278–363, and 375–463; these read GMWW…MKRL, LRIH…LKNT, and PGVF…LKIT. The chain crosses the membrane as a helical span at residues 190 to 207; it reads LVAGGGAGAVSRTCTAPL. Residues 208-244 lie on the Mitochondrial matrix side of the membrane; that stretch reads DRLKVLMQVHASRSNNMCIVGGFTQMIREGGAKSLWR. Residues 245–264 traverse the membrane as a helical segment; the sequence is GNGINVLKIAPESAIKFMAY. Over 265–287 the chain is Mitochondrial intermembrane; the sequence is EQMKRLVGSDQETLRIHERLVAG. The helical transmembrane segment at 288–301 threads the bilayer; sequence SLAGAIAQSSIYPM. The Mitochondrial matrix portion of the chain corresponds to 302 to 337; it reads EVLKTRMALRKTGQYSGMLDCARRILAKEGVAAFYK. Residues 338–357 form a helical membrane-spanning segment; that stretch reads GYIPNMLGIIPYAGIDLAVY. Residues 358-380 lie on the Mitochondrial intermembrane side of the membrane; the sequence is ETLKNTWLQRYAVNSADPGVFVL. A helical membrane pass occupies residues 381 to 398; it reads LACGTISSTCGQLASYPL. The Mitochondrial matrix portion of the chain corresponds to 399–437; that stretch reads ALVRTRMQAQASIEGAPEVTMSSLFKQILRTEGAFGLYR. Residues 438–457 form a helical membrane-spanning segment; it reads GLAPNFMKVIPAVSISYVVY. Over 458-469 the chain is Mitochondrial intermembrane; sequence ENLKITLGVQSR.

The protein belongs to the mitochondrial carrier (TC 2.A.29) family.

The protein resides in the mitochondrion inner membrane. It carries out the reaction Mg(2+)(out) + phosphate(in) + ATP(out) = Mg(2+)(in) + phosphate(out) + ATP(in). Activated by an increase in cytosolic calcium levels that induce a conformational change of the N-terminal regulatory domain, uncapping the channel and allowing transport. In terms of biological role, electroneutral antiporter that most probably mediates the transport of adenyl nucleotides through the inner mitochondrial membrane. Originally identified as an ATP-magnesium/inorganic phosphate antiporter, it could have a broader specificity for adenyl nucleotides. By regulating the mitochondrial matrix adenyl nucleotide pool could adapt to changing cellular energetic demands and indirectly regulate adenyl nucleotide-dependent metabolic pathways. This Mus musculus (Mouse) protein is Mitochondrial adenyl nucleotide antiporter SLC25A25.